Consider the following 2971-residue polypeptide: uncharacterized protein (2971 aa).

A disordered region spans residues 929–964 (SANFSNGPEESSLSTRLHIQKKRKAKKQRLETRRQK). Residues 936–945 (PEESSLSTRL) show a composition bias toward polar residues. Over residues 946–955 (HIQKKRKAKK) the composition is skewed to basic residues.

Its subcellular location is the plastid. It is found in the chloroplast. This is an uncharacterized protein from Chlamydomonas reinhardtii (Chlamydomonas smithii).